We begin with the raw amino-acid sequence, 187 residues long: Elongation factor P (187 aa).

It belongs to the elongation factor P family.

It localises to the cytoplasm. Its pathway is protein biosynthesis; polypeptide chain elongation. In terms of biological role, involved in peptide bond synthesis. Stimulates efficient translation and peptide-bond synthesis on native or reconstituted 70S ribosomes in vitro. Probably functions indirectly by altering the affinity of the ribosome for aminoacyl-tRNA, thus increasing their reactivity as acceptors for peptidyl transferase. This is Elongation factor P from Frankia casuarinae (strain DSM 45818 / CECT 9043 / HFP020203 / CcI3).